Here is a 548-residue protein sequence, read N- to C-terminus: Synaptic vesicle 2-related protein (548 aa).

The Cytoplasmic segment spans residues 1 to 87 (MEEDLFQLRQ…GFGKFQWKLS (87 aa)). Phosphoserine occurs at positions 25 and 31. Residues 88 to 108 (VLTGLAWMADAMEMMILSILA) form a helical membrane-spanning segment. The Vesicular portion of the chain corresponds to 109 to 122 (PQLHCEWRLPSWQV). A helical membrane pass occupies residues 123-143 (ALLTSVVFVGMMSSSTLWGNI). The Cytoplasmic portion of the chain corresponds to 144–156 (SDQYGRKTGLKIS). The helical transmembrane segment at 157–177 (VLWTLYYGILSAFAPVYSWIL) threads the bilayer. Residues 178-180 (VLR) are Vesicular-facing. A helical membrane pass occupies residues 181-201 (GLVGFGIGGVPQSVTLYAEFL). At 202-209 (PMKARAKC) the chain is on the cytoplasmic side. The helical transmembrane segment at 210–230 (ILLIEVFWAIGTVFEVVLAVF) threads the bilayer. The Vesicular portion of the chain corresponds to 231 to 238 (VMPSLGWR). Residues 239 to 259 (WLLILSAVPLLLFAVLCFWLP) traverse the membrane as a helical segment. At 260–316 (ESARYDVLSGNQEKAIATLKRIATENGAPMPLGKLIISRQEDRGKMRDLFTPHFRWT) the chain is on the cytoplasmic side. A helical membrane pass occupies residues 317 to 337 (TLLLWFIWFSNAFSYYGLVLL). Residues 338 to 373 (TTELFQAGDVCSISSRKKAVEAKCSLACEYLSEEDY) are Vesicular-facing. A helical transmembrane segment spans residues 374–394 (MDLLWTTLSEFPGVLVTLWII). The Cytoplasmic segment spans residues 395–401 (DRLGRKK). A helical transmembrane segment spans residues 402 to 422 (TMALCFVVFSFCSLLLFICVG). Residues 423-425 (RNM) lie on the Vesicular side of the membrane. The chain crosses the membrane as a helical span at residues 426–446 (LTLLLFIARAFISGGFQAAYV). At 447–457 (YTPEVYPTATR) the chain is on the cytoplasmic side. Residues 458 to 478 (ALGLGTCSGMARVGALITPFI) form a helical membrane-spanning segment. At 479–489 (AQVMLESSVYL) the chain is on the vesicular side. The chain crosses the membrane as a helical span at residues 490-510 (TLAVYSGCCLLAALASCFLPI). At 511-548 (ETKGRGLQESSHREWGQEMVGRGAHGTGVARSNSGSQE) the chain is on the cytoplasmic side. Residues 528 to 548 (EMVGRGAHGTGVARSNSGSQE) are disordered. Residue Ser-542 is modified to Phosphoserine.

This sequence belongs to the major facilitator superfamily. Detected in brain and adrenal medulla.

The protein resides in the cytoplasmic vesicle. Its subcellular location is the secretory vesicle. The protein localises to the synaptic vesicle membrane. In Bos taurus (Bovine), this protein is Synaptic vesicle 2-related protein (SVOP).